We begin with the raw amino-acid sequence, 159 residues long: Capsid protein (159 aa).

Belongs to the virgaviridae capsid protein family.

The protein localises to the virion. Its function is as follows. Capsid protein self-assembles to form rod-shaped virions about 18 nm in diameter with a central canal enclosing the viral genomic RNA. The polypeptide is Capsid protein (CP) (Tomato mosaic virus (strain Kazakh K2) (ToMV)).